Reading from the N-terminus, the 343-residue chain is Probable dolichyl-diphosphooligosaccharide--protein glycosyltransferase subunit 3A (343 aa).

The N-terminal stretch at 1 to 22 (MVIQTNLSYRFFILIVFLFTLA) is a signal peptide. Residues 23 to 185 (NPKSDSDLKN…TVCSIQRPPL (163 aa)) lie on the Lumenal side of the membrane. N-linked (GlcNAc...) asparagine glycans are attached at residues Asn105, Asn108, and Asn146. A helical transmembrane segment spans residues 186–206 (ISKTQIGIIVAIIIISTPILI). Over 207–220 (KKILKGETLLHDHR) the chain is Cytoplasmic. Residues 221–241 (IWLVGAVFVYFFSVSGTMHNI) traverse the membrane as a helical segment. Residues 242–273 (IREMPMYIKDYEDSSKFVFFIEESEMQLGAEG) lie on the Lumenal side of the membrane. The helical transmembrane segment at 274 to 294 (FFVGFLYTVVGLLLAFVTNVV) threads the bilayer. Topologically, residues 295-304 (VRVKKLDEQR) are cytoplasmic. The chain crosses the membrane as a helical span at residues 305-325 (MAMLLALSISFWAVRKVVYLD). The Lumenal portion of the chain corresponds to 326-343 (NWKTGYEIYPYWPSSWRG).

The protein belongs to the OST3/OST6 family. As to quaternary structure, component of the oligosaccharyltransferase (OST) complex.

Its subcellular location is the endoplasmic reticulum membrane. Functionally, subunit of the oligosaccharyl transferase (OST) complex that catalyzes the initial transfer of a defined glycan (Glc(3)Man(9)GlcNAc(2) in eukaryotes) from the lipid carrier dolichol-pyrophosphate to an asparagine residue within an Asn-X-Ser/Thr consensus motif in nascent polypeptide chains, the first step in protein N-glycosylation. N-glycosylation occurs cotranslationally and the complex associates with the Sec61 complex at the channel-forming translocon complex that mediates protein translocation across the endoplasmic reticulum (ER). All subunits are required for a maximal enzyme activity. This is Probable dolichyl-diphosphooligosaccharide--protein glycosyltransferase subunit 3A (OST3A) from Arabidopsis thaliana (Mouse-ear cress).